The primary structure comprises 541 residues: Neutral amino acid transporter B(0) (541 aa).

N-acetylmethionine is present on Met-1. At 1–51 the chain is on the cytoplasmic side; that stretch reads MVADPPRDSKGLAAAEPTANGGLALASIEDQGAAAGGYCGSRDQVRRCLRA. A helical transmembrane segment spans residues 52–81; the sequence is NLLVLLTVVAVVAGVALGLGVSGAGGALAL. Residues 82-94 are Extracellular-facing; that stretch reads GPERLSAFVFPGE. Residues 95–116 traverse the membrane as a helical segment; the sequence is LLLRLLRMIILPLVVCSLIGGA. Residues 117–130 are Cytoplasmic-facing; that stretch reads ASLDPGALGRLGAW. The helical transmembrane segment at 131 to 153 threads the bilayer; the sequence is ALLFFLVTTLLASALGVGLALAL. The Extracellular portion of the chain corresponds to 154–224; the sequence is QPGAASAAIN…GTRVKVPVGQ (71 aa). 2 N-linked (GlcNAc...) asparagine glycosylation sites follow: Asn-163 and Asn-212. Residues 225-248 form a helical membrane-spanning segment; that stretch reads EVEGMNILGLVVFAIVFGVALRKL. Residues 249 to 257 lie on the Cytoplasmic side of the membrane; sequence GPEGELLIR. A helical transmembrane segment spans residues 258–285; sequence FFNSFNEATMVLVSWIMWYAPVGIMFLV. The Extracellular portion of the chain corresponds to 286–306; the sequence is AGKIVEMEDVGLLFARLGKYI. The helical transmembrane segment at 307 to 328 threads the bilayer; sequence LCCLLGHAIHGLLVLPLIYFLF. Residues 329–333 lie on the Cytoplasmic side of the membrane; sequence TRKNP. Positions 334–364 form an intramembrane region, discontinuously helical; that stretch reads YRFLWGIVTPLATAFGTSSSSATLPLMMKCV. The Cytoplasmic segment spans residues 365 to 373; it reads EENNGVAKH. A helical membrane pass occupies residues 374–400; that stretch reads ISRFILPIGATVNMDGAALFQCVAAVF. Gly-382, Thr-384, and Asn-386 together coordinate Na(+). At 401–413 the chain is on the extracellular side; that stretch reads IAQLSQQSLDFVK. Residues 414-447 constitute an intramembrane region (discontinuously helical); it reads IITILVTATASSVGAAGIPAGGVLTLAIILEAVN. The Extracellular segment spans residues 448-460; that stretch reads LPVDHISLILAVD. A helical transmembrane segment spans residues 461-482; the sequence is WLVDRSCTVLNVEGDALGAGLL. Residues Asn-471 and Asp-475 each contribute to the Na(+) site. Over 483–541 the chain is Cytoplasmic; that stretch reads QNYVDRTESRSTEPELIQVKSELPLDPLPVPTEEGNPLLKHYRGPAGDATVASEKESVM. Position 493 is a phosphoserine (Ser-493). Phosphothreonine is present on Thr-494. Phosphoserine is present on residues Ser-503, Ser-535, and Ser-539. The disordered stretch occupies residues 511–541; sequence PVPTEEGNPLLKHYRGPAGDATVASEKESVM.

This sequence belongs to the dicarboxylate/amino acid:cation symporter (DAACS) (TC 2.A.23) family. SLC1A5 subfamily. As to quaternary structure, homotrimer. Interacts with ERVH48-1/suppressyn; may negatively regulate syncytialization. As to expression, placenta, lung, skeletal muscle, kidney, pancreas, and intestine. Expressed in CD34-positive hematopoietic progenitors (at protein level).

It localises to the cell membrane. It is found in the melanosome. The catalysed reaction is L-glutamine(out) + L-serine(in) + Na(+)(out) = L-glutamine(in) + L-serine(out) + Na(+)(in). The enzyme catalyses L-glutamine(in) + L-serine(out) + Na(+)(out) = L-glutamine(out) + L-serine(in) + Na(+)(in). It carries out the reaction L-threonine(in) + L-glutamine(out) + Na(+)(out) = L-threonine(out) + L-glutamine(in) + Na(+)(in). It catalyses the reaction L-threonine(out) + L-glutamine(in) + Na(+)(out) = L-threonine(in) + L-glutamine(out) + Na(+)(in). The catalysed reaction is L-asparagine(in) + L-glutamine(out) + Na(+)(out) = L-asparagine(out) + L-glutamine(in) + Na(+)(in). The enzyme catalyses L-asparagine(out) + L-glutamine(in) + Na(+)(out) = L-asparagine(in) + L-glutamine(out) + Na(+)(in). It carries out the reaction L-glutamine(in) + L-alanine(out) + Na(+)(out) = L-glutamine(out) + L-alanine(in) + Na(+)(in). It catalyses the reaction L-valine(out) + L-glutamine(in) + Na(+)(out) = L-valine(in) + L-glutamine(out) + Na(+)(in). The catalysed reaction is L-glutamine(in) + L-methionine(out) + Na(+)(out) = L-glutamine(out) + L-methionine(in) + Na(+)(in). The enzyme catalyses L-glutamine(in) + L-glutamate(out) + Na(+)(out) + H(+)(out) = L-glutamine(out) + L-glutamate(in) + Na(+)(in) + H(+)(in). It carries out the reaction D-serine(in) + L-glutamine(out) + Na(+)(out) = D-serine(out) + L-glutamine(in) + Na(+)(in). It catalyses the reaction D-serine(in) + L-alanine(out) + Na(+)(out) = D-serine(out) + L-alanine(in) + Na(+)(in). The catalysed reaction is nitrate(in) = nitrate(out). The enzyme catalyses iodide(out) = iodide(in). It carries out the reaction thiocyanate(in) = thiocyanate(out). With respect to regulation, regulated by L-cysteine, which can either inhibit substrate influx or trigger substrate efflux without being transported itself. Sodium-coupled antiporter of neutral amino acids. In a tri-substrate transport cycle, exchanges neutral amino acids between the extracellular and intracellular compartments, coupled to the inward cotransport of at least one sodium ion. The preferred substrate is the essential amino acid L-glutamine, a precursor for biosynthesis of proteins, nucleotides and amine sugars as well as an alternative fuel for mitochondrial oxidative phosphorylation. Exchanges L-glutamine with other neutral amino acids such as L-serine, L-threonine and L-asparagine in a bidirectional way. Provides L-glutamine to proliferating stem and activated cells driving the metabolic switch toward cell differentiation. The transport cycle is usually pH-independent, with the exception of L-glutamate. Transports extracellular L-glutamate coupled to the cotransport of one proton and one sodium ion in exchange for intracellular L-glutamine counter-ion. May provide for L-glutamate uptake in glial cells regulating glutamine/glutamate cycle in the nervous system. Can transport D-amino acids. Mediates D-serine release from the retinal glia potentially affecting NMDA receptor function in retinal neurons. Displays sodium- and amino acid-dependent but uncoupled channel-like anion conductance with a preference SCN(-) &gt;&gt; NO3(-) &gt; I(-) &gt; Cl(-). Through binding of the fusogenic protein syncytin-1/ERVW-1 may mediate trophoblasts syncytialization, the spontaneous fusion of their plasma membranes, an essential process in placental development. Its function is as follows. (Microbial infection) Acts as a cell surface receptor for Feline endogenous virus RD114. Functionally, (Microbial infection) Acts as a cell surface receptor for Baboon M7 endogenous virus. In terms of biological role, (Microbial infection) Acts as a cell surface receptor for type D simian retroviruses. The polypeptide is Neutral amino acid transporter B(0) (Homo sapiens (Human)).